The following is a 155-amino-acid chain: Large ribosomal subunit protein uL22 (155 aa).

It belongs to the universal ribosomal protein uL22 family. Part of the 50S ribosomal subunit.

In terms of biological role, this protein binds specifically to 23S rRNA. It makes multiple contacts with different domains of the 23S rRNA in the assembled 50S subunit and ribosome. Functionally, the globular domain of the protein is located near the polypeptide exit tunnel on the outside of the subunit, while an extended beta-hairpin is found that lines the wall of the exit tunnel in the center of the 70S ribosome. In Archaeoglobus fulgidus (strain ATCC 49558 / DSM 4304 / JCM 9628 / NBRC 100126 / VC-16), this protein is Large ribosomal subunit protein uL22.